We begin with the raw amino-acid sequence, 156 residues long: PopC secretion inhibitor (156 aa).

The segment at 1–89 is disordered; sequence MNPGSAPWER…PVRSRAEVHQ (89 aa). The segment covering 8–28 has biased composition (basic and acidic residues); that stretch reads WERRTRERMRAMSRKNGEWGD.

As to quaternary structure, interacts with PopC in non-starving cells.

Its subcellular location is the cytoplasm. With respect to regulation, in response to starvation, RelA is activated resulting in the accumulation of (p)ppGpp, which causes the degradation of PopD in an FtsH(D)-dependent manner, thereby releasing pre-formed PopC for secretion. In terms of biological role, inhibitor of protease PopC. In non-starving cells, forms a cytoplasmic complex with PopC and inhibits PopC secretion and activity. In Myxococcus xanthus (strain DK1622), this protein is PopC secretion inhibitor.